A 185-amino-acid chain; its full sequence is Class I hydrophobin SC6 (185 aa).

The N-terminal stretch at 1 to 17 (MVSRVLALISVAMLVGA) is a signal peptide. The disordered stretch occupies residues 70–104 (HIPEVTGSSTEEATSSSTWSGASSKPTDSAPTQCN). A compositionally biased stretch (low complexity) spans 75 to 93 (TGSSTEEATSSSTWSGASS). Residues 94-104 (KPTDSAPTQCN) show a composition bias toward polar residues. 4 cysteine pairs are disulfide-bonded: Cys-103/Cys-164, Cys-110/Cys-158, Cys-111/Cys-144, and Cys-165/Cys-178.

Belongs to the fungal hydrophobin family. Self-assembles to form functional amyloid fibrils called rodlets. Self-assembly into fibrillar rodlets occurs spontaneously at hydrophobic:hydrophilic interfaces and the rodlets further associate laterally to form amphipathic monolayers.

The protein localises to the secreted. It is found in the cell wall. In terms of biological role, aerial growth, conidiation, and dispersal of filamentous fungi in the environment rely upon a capability of their secreting small amphipathic proteins called hydrophobins (HPBs) with low sequence identity. Class I can self-assemble into an outermost layer of rodlet bundles on aerial cell surfaces, conferring cellular hydrophobicity that supports fungal growth, development and dispersal; whereas Class II form highly ordered films at water-air interfaces through intermolecular interactions but contribute nothing to the rodlet structure. SC6 is a dikaryon-specific class I hydrophobin that contributes to the formation of aerial hyphae and fruiting bodies. This chain is Class I hydrophobin SC6, found in Schizophyllum commune (Split gill fungus).